Consider the following 904-residue polypeptide: Myelin regulatory factor-like protein (904 aa).

The segment at 46–132 (LQRQLPDTPP…ATCRHQTGPS (87 aa)) is disordered. Residues 100–117 (PSQSMAGQTHSSFQNGYP) are compositionally biased toward polar residues. Residues 108–400 (THSSFQNGYP…SNPGQFENDS (293 aa)) constitute a DNA-binding region (NDT80). One can recognise a Peptidase S74 domain in the interval 446–554 (SDSRVKENIQ…KLTNNLEERI (109 aa)). A coiled-coil region spans residues 538–575 (GAVKQLCKLTNNLEERIEELEIWNKKLARLKRLSSSWK). Residues 624 to 644 (LVVVLIAVMAFCALTIVALYI) traverse the membrane as a helical segment. The interval 656–688 (NLPLSNMTSSPEPALSSTAPTSAPHTTPETTQT) is disordered. Positions 663-688 (TSSPEPALSSTAPTSAPHTTPETTQT) are enriched in low complexity.

Belongs to the MRF family.

It is found in the membrane. This Mus musculus (Mouse) protein is Myelin regulatory factor-like protein (Myrfl).